The primary structure comprises 146 residues: Putative pre-16S rRNA nuclease (146 aa).

Belongs to the YqgF nuclease family.

It is found in the cytoplasm. Could be a nuclease involved in processing of the 5'-end of pre-16S rRNA. The sequence is that of Putative pre-16S rRNA nuclease from Pseudomonas savastanoi pv. phaseolicola (strain 1448A / Race 6) (Pseudomonas syringae pv. phaseolicola (strain 1448A / Race 6)).